A 425-amino-acid polypeptide reads, in one-letter code: Meiotic recombination protein spo-11 (425 aa).

Positions 1–38 (MYEYSFNPNIDHEPGSVESQQSTIYSDSDDSDDSFLDD) are disordered. The Topo IIA-type catalytic domain maps to 15–158 (GSVESQQSTI…LNILSCGRGI (144 aa)). The span at 27–38 (DSDDSDDSFLDD) shows a compositional bias: acidic residues. Y119 (O-(5'-phospho-DNA)-tyrosine intermediate) is an active-site residue. Residues E202 and D255 each contribute to the Mg(2+) site.

The protein belongs to the TOP6A family. Mg(2+) is required as a cofactor.

It localises to the nucleus. The enzyme catalyses ATP-dependent breakage, passage and rejoining of double-stranded DNA.. In terms of biological role, required for meiotic recombination. Mediates DNA cleavage that forms the double-strand breaks (DSB) that initiate meiotic recombination. The chain is Meiotic recombination protein spo-11 (spo-11) from Caenorhabditis elegans.